Consider the following 191-residue polypeptide: Peptidyl-tRNA hydrolase (191 aa).

Position 14 (tyrosine 14) interacts with tRNA. The active-site Proton acceptor is the histidine 19. TRNA-binding residues include tyrosine 65, asparagine 67, and asparagine 113.

It belongs to the PTH family. In terms of assembly, monomer.

Its subcellular location is the cytoplasm. The enzyme catalyses an N-acyl-L-alpha-aminoacyl-tRNA + H2O = an N-acyl-L-amino acid + a tRNA + H(+). Its function is as follows. Hydrolyzes ribosome-free peptidyl-tRNAs (with 1 or more amino acids incorporated), which drop off the ribosome during protein synthesis, or as a result of ribosome stalling. Catalyzes the release of premature peptidyl moieties from peptidyl-tRNA molecules trapped in stalled 50S ribosomal subunits, and thus maintains levels of free tRNAs and 50S ribosomes. This chain is Peptidyl-tRNA hydrolase, found in Nitrosospira multiformis (strain ATCC 25196 / NCIMB 11849 / C 71).